The primary structure comprises 200 residues: Pyrrolidone-carboxylate peptidase (200 aa).

Active-site residues include Glu-78, Cys-141, and His-165.

It belongs to the peptidase C15 family. As to quaternary structure, homotetramer.

It localises to the cytoplasm. It carries out the reaction Release of an N-terminal pyroglutamyl group from a polypeptide, the second amino acid generally not being Pro.. Functionally, removes 5-oxoproline from various penultimate amino acid residues except L-proline. The chain is Pyrrolidone-carboxylate peptidase from Thermococcus onnurineus (strain NA1).